The chain runs to 486 residues: uncharacterized protein (486 aa).

A helical membrane pass occupies residues 18–38 (TLLQLFVFTVICVFVLSGLAI). The segment covering 62–79 (DRQKQMEKQQDSGEKRSF) has biased composition (basic and acidic residues). Disordered regions lie at residues 62–82 (DRQK…FEST) and 117–147 (IESS…GPQM). Residues 119-132 (SSSSSDSSSSSSSS) show a composition bias toward low complexity. The next 3 helical transmembrane spans lie at 324–344 (VVYL…MMSI), 365–385 (IGQF…LASV), and 451–471 (MLIL…LPSI).

The protein belongs to the ABC-4 integral membrane protein family.

The protein resides in the cell membrane. This is an uncharacterized protein from Bacillus subtilis (strain 168).